Reading from the N-terminus, the 135-residue chain is Putative pre-16S rRNA nuclease (135 aa).

It belongs to the YqgF nuclease family.

It localises to the cytoplasm. Could be a nuclease involved in processing of the 5'-end of pre-16S rRNA. The polypeptide is Putative pre-16S rRNA nuclease (Clostridium acetobutylicum (strain ATCC 824 / DSM 792 / JCM 1419 / IAM 19013 / LMG 5710 / NBRC 13948 / NRRL B-527 / VKM B-1787 / 2291 / W)).